A 353-amino-acid chain; its full sequence is UDP-N-acetylglucosamine--N-acetylmuramyl-(pentapeptide) pyrophosphoryl-undecaprenol N-acetylglucosamine transferase (353 aa).

Residues 10-12 (TGG), Asn124, Ser183, and Gln283 each bind UDP-N-acetyl-alpha-D-glucosamine.

It belongs to the glycosyltransferase 28 family. MurG subfamily.

Its subcellular location is the cell inner membrane. It carries out the reaction di-trans,octa-cis-undecaprenyl diphospho-N-acetyl-alpha-D-muramoyl-L-alanyl-D-glutamyl-meso-2,6-diaminopimeloyl-D-alanyl-D-alanine + UDP-N-acetyl-alpha-D-glucosamine = di-trans,octa-cis-undecaprenyl diphospho-[N-acetyl-alpha-D-glucosaminyl-(1-&gt;4)]-N-acetyl-alpha-D-muramoyl-L-alanyl-D-glutamyl-meso-2,6-diaminopimeloyl-D-alanyl-D-alanine + UDP + H(+). It functions in the pathway cell wall biogenesis; peptidoglycan biosynthesis. Functionally, cell wall formation. Catalyzes the transfer of a GlcNAc subunit on undecaprenyl-pyrophosphoryl-MurNAc-pentapeptide (lipid intermediate I) to form undecaprenyl-pyrophosphoryl-MurNAc-(pentapeptide)GlcNAc (lipid intermediate II). This is UDP-N-acetylglucosamine--N-acetylmuramyl-(pentapeptide) pyrophosphoryl-undecaprenol N-acetylglucosamine transferase from Helicobacter pylori (strain HPAG1).